The following is a 618-amino-acid chain: 1-deoxy-D-xylulose-5-phosphate synthase (618 aa).

Thiamine diphosphate is bound by residues His77 and Gly118–Ser120. Position 149 (Asp149) interacts with Mg(2+). Thiamine diphosphate contacts are provided by residues Gly150–Ala151, Asn178, Tyr285, and Glu367. A Mg(2+)-binding site is contributed by Asn178.

This sequence belongs to the transketolase family. DXPS subfamily. Homodimer. Mg(2+) is required as a cofactor. The cofactor is thiamine diphosphate.

It carries out the reaction D-glyceraldehyde 3-phosphate + pyruvate + H(+) = 1-deoxy-D-xylulose 5-phosphate + CO2. It functions in the pathway metabolic intermediate biosynthesis; 1-deoxy-D-xylulose 5-phosphate biosynthesis; 1-deoxy-D-xylulose 5-phosphate from D-glyceraldehyde 3-phosphate and pyruvate: step 1/1. In terms of biological role, catalyzes the acyloin condensation reaction between C atoms 2 and 3 of pyruvate and glyceraldehyde 3-phosphate to yield 1-deoxy-D-xylulose-5-phosphate (DXP). This chain is 1-deoxy-D-xylulose-5-phosphate synthase, found in Idiomarina loihiensis (strain ATCC BAA-735 / DSM 15497 / L2-TR).